The following is a 617-amino-acid chain: 1-deoxy-D-xylulose-5-phosphate synthase (617 aa).

Thiamine diphosphate-binding positions include His76 and 117–119 (GHS). Asp148 is a Mg(2+) binding site. Thiamine diphosphate is bound by residues 149-150 (GA), Asn177, Tyr285, and Glu366. Residue Asn177 coordinates Mg(2+).

The protein belongs to the transketolase family. DXPS subfamily. As to quaternary structure, homodimer. It depends on Mg(2+) as a cofactor. Thiamine diphosphate is required as a cofactor.

It carries out the reaction D-glyceraldehyde 3-phosphate + pyruvate + H(+) = 1-deoxy-D-xylulose 5-phosphate + CO2. It functions in the pathway metabolic intermediate biosynthesis; 1-deoxy-D-xylulose 5-phosphate biosynthesis; 1-deoxy-D-xylulose 5-phosphate from D-glyceraldehyde 3-phosphate and pyruvate: step 1/1. Functionally, catalyzes the acyloin condensation reaction between C atoms 2 and 3 of pyruvate and glyceraldehyde 3-phosphate to yield 1-deoxy-D-xylulose-5-phosphate (DXP). The sequence is that of 1-deoxy-D-xylulose-5-phosphate synthase from Mannheimia succiniciproducens (strain KCTC 0769BP / MBEL55E).